A 548-amino-acid polypeptide reads, in one-letter code: ATP synthase subunit alpha (548 aa).

Residue 172 to 179 (GDRKTGKT) participates in ATP binding. Residues 510 to 548 (QFTTSSGESAAPSEPEAEALAADEVGQETVKVNRPAPKK) are disordered. The segment covering 514–531 (SSGESAAPSEPEAEALAA) has biased composition (low complexity).

This sequence belongs to the ATPase alpha/beta chains family. F-type ATPases have 2 components, CF(1) - the catalytic core - and CF(0) - the membrane proton channel. CF(1) has five subunits: alpha(3), beta(3), gamma(1), delta(1), epsilon(1). CF(0) has three main subunits: a(1), b(2) and c(9-12). The alpha and beta chains form an alternating ring which encloses part of the gamma chain. CF(1) is attached to CF(0) by a central stalk formed by the gamma and epsilon chains, while a peripheral stalk is formed by the delta and b chains.

The protein localises to the cell membrane. The enzyme catalyses ATP + H2O + 4 H(+)(in) = ADP + phosphate + 5 H(+)(out). Its function is as follows. Produces ATP from ADP in the presence of a proton gradient across the membrane. The alpha chain is a regulatory subunit. The polypeptide is ATP synthase subunit alpha (Saccharopolyspora erythraea (strain ATCC 11635 / DSM 40517 / JCM 4748 / NBRC 13426 / NCIMB 8594 / NRRL 2338)).